A 392-amino-acid polypeptide reads, in one-letter code: Putative RNA-binding protein Luc7-like 2 (392 aa).

Ser18 is modified (phosphoserine). A coiled-coil region spans residues Glu102 to Met177. Residues Lys235–Lys257 show a composition bias toward basic and acidic residues. Residues Lys235–Ile392 are disordered. Residues Leu258–His321 show a composition bias toward basic residues. 5-hydroxylysine; by JMJD6 is present on residues Lys266 and Lys269. Composition is skewed to basic and acidic residues over residues Lys337–Arg364 and Arg377–Ile392.

This sequence belongs to the Luc7 family. As to quaternary structure, interacts with SCNM1.

It is found in the nucleus speckle. The protein resides in the nucleus. The protein localises to the nucleoplasm. In terms of biological role, may bind to RNA via its Arg/Ser-rich domain. This is Putative RNA-binding protein Luc7-like 2 (LUC7L2) from Homo sapiens (Human).